We begin with the raw amino-acid sequence, 92 residues long: Small ribosomal subunit protein uS19c (92 aa).

A disordered region spans residues Glu-73–Arg-92. Over residues Tyr-80 to Arg-92 the composition is skewed to basic residues.

The protein belongs to the universal ribosomal protein uS19 family.

Its subcellular location is the plastid. It is found in the chloroplast. Its function is as follows. Protein S19 forms a complex with S13 that binds strongly to the 16S ribosomal RNA. The protein is Small ribosomal subunit protein uS19c (rps19) of Chlamydomonas reinhardtii (Chlamydomonas smithii).